The sequence spans 259 residues: Undecaprenyl-diphosphatase (259 aa).

7 consecutive transmembrane segments (helical) span residues 1–21, 40–60, 75–95, 101–121, 179–199, 206–226, and 239–259; these read MEIFKVIFLGIIQGLTEFLPI, QITLDVFLHFGTVIPVLIIFW, WLTILILVGIIPTGIIGILFE, LFSSVKTVGFMLLVTGFLLYL, SFLLSAPVIFGAGLVELKDAL, LTWLSIIIGTIFAALSGYFAI, and TVFAYYCWIVGIMIIILAGIF.

It belongs to the UppP family.

The protein localises to the cell inner membrane. It catalyses the reaction di-trans,octa-cis-undecaprenyl diphosphate + H2O = di-trans,octa-cis-undecaprenyl phosphate + phosphate + H(+). Catalyzes the dephosphorylation of undecaprenyl diphosphate (UPP). Confers resistance to bacitracin. The chain is Undecaprenyl-diphosphatase from Halothermothrix orenii (strain H 168 / OCM 544 / DSM 9562).